The sequence spans 119 residues: MKIALIAHDKKKEEMIELAKDFEDKLSKHILVATGTTGLKVMQNTSLDVKRCKSGPLGGDQEIGAMVANHDVDMVIFLRDPLTAQPHEPDISALLRLCDVYKVPLATNTESAKLIMADI.

The MGS-like domain maps to 1–119 (MKIALIAHDK…ESAKLIMADI (119 aa)). Substrate is bound by residues histidine 8, lysine 12, 34–37 (TGTT), and 54–55 (SG). Catalysis depends on aspartate 60, which acts as the Proton donor/acceptor. Histidine 87 contributes to the substrate binding site.

This sequence belongs to the methylglyoxal synthase family.

The catalysed reaction is dihydroxyacetone phosphate = methylglyoxal + phosphate. Catalyzes the formation of methylglyoxal from dihydroxyacetone phosphate. The polypeptide is Methylglyoxal synthase (Clostridium perfringens (strain ATCC 13124 / DSM 756 / JCM 1290 / NCIMB 6125 / NCTC 8237 / Type A)).